A 259-amino-acid polypeptide reads, in one-letter code: Diaminopimelate epimerase (259 aa).

Residues asparagine 14, glutamine 42, and asparagine 60 each contribute to the substrate site. The active-site Proton donor is cysteine 69. Substrate contacts are provided by residues 70–71 (GN), asparagine 151, asparagine 184, and 202–203 (ER). The active-site Proton acceptor is cysteine 211. 212–213 (GS) contributes to the substrate binding site.

It belongs to the diaminopimelate epimerase family. In terms of assembly, homodimer.

It is found in the cytoplasm. The enzyme catalyses (2S,6S)-2,6-diaminopimelate = meso-2,6-diaminopimelate. Its pathway is amino-acid biosynthesis; L-lysine biosynthesis via DAP pathway; DL-2,6-diaminopimelate from LL-2,6-diaminopimelate: step 1/1. Its function is as follows. Catalyzes the stereoinversion of LL-2,6-diaminopimelate (L,L-DAP) to meso-diaminopimelate (meso-DAP), a precursor of L-lysine and an essential component of the bacterial peptidoglycan. This chain is Diaminopimelate epimerase, found in Wolbachia sp. subsp. Brugia malayi (strain TRS).